A 267-amino-acid polypeptide reads, in one-letter code: Probable 3-methyl-2-oxobutanoate hydroxymethyltransferase (267 aa).

Belongs to the PanB family.

The enzyme catalyses 3-methyl-2-oxobutanoate + (6R)-5,10-methylene-5,6,7,8-tetrahydrofolate + H2O = 2-dehydropantoate + (6S)-5,6,7,8-tetrahydrofolate. Its pathway is cofactor biosynthesis; (R)-pantothenate biosynthesis; (R)-pantoate from 3-methyl-2-oxobutanoate: step 1/2. The protein is Probable 3-methyl-2-oxobutanoate hydroxymethyltransferase of Schizosaccharomyces pombe (strain 972 / ATCC 24843) (Fission yeast).